We begin with the raw amino-acid sequence, 592 residues long: MKTGTIVKVSGPLVVAEGMRDANMFDVVRVSDKHLIGEIIEMHGDKASIQVYEETSGLGPGEEVVSLGMPMSVELGPGLISTIYDGIQRPLEKMYDISGTNITKGVEVSSLDRTTKWEFKPKKSVGDKVVAGDIIGGVQETAVVECKIMVPYGVKGTIKEIYSGEFTVEDTVCVITDEKGNDIPVTMMQKWPVRKERPYREKKTPDSLLVTGQRVIDTFFPITKGGVAAIPGPFGSGKTVTQHQLAKWADADIVVYIGCGERGNEMTDVLLEFPELKDPRTGESLMQRTVLIANTSDMPVAAREASIYTGITIAEYFRDMGYSVALMADSTSRWAEALREMSGRLEEMPGEEGYPAYLGSRLAQFYERAGKVNCLGMDEREGTLTAIGAVSPPGGDTSEPVSQATLRIVKVFWGLDASLAYKRHFPAINWLTSYSLYQEKVDVWADKNVNDNFSAQRAQAMKLLQVESELQEIVQLVGVDSLSDGDRLILEVTRSIREDFLHQNSFHEVDTYTSLHKQYRMMGLILKFYKSAQDAIKQNVTINDIIKLSVLEKIGRAKYVEEGDIDAAYDSIEDEIDNELADLIKKRGAEEL.

232–239 (GPFGSGKT) is a binding site for ATP.

The protein belongs to the ATPase alpha/beta chains family.

It carries out the reaction ATP + H2O + 4 H(+)(in) = ADP + phosphate + 5 H(+)(out). Functionally, produces ATP from ADP in the presence of a proton gradient across the membrane. The V-type alpha chain is a catalytic subunit. The polypeptide is V-type ATP synthase alpha chain (Clostridioides difficile (strain 630) (Peptoclostridium difficile)).